Consider the following 319-residue polypeptide: D-alanine--D-alanine ligase (319 aa).

In terms of domain architecture, ATP-grasp spans lysine 109 to glutamine 313. Proline 139 to threonine 194 is a binding site for ATP. Residues aspartate 266, glutamate 280, and asparagine 282 each contribute to the Mg(2+) site.

This sequence belongs to the D-alanine--D-alanine ligase family. Mg(2+) serves as cofactor. Mn(2+) is required as a cofactor.

The protein localises to the cytoplasm. It carries out the reaction 2 D-alanine + ATP = D-alanyl-D-alanine + ADP + phosphate + H(+). Its pathway is cell wall biogenesis; peptidoglycan biosynthesis. In terms of biological role, cell wall formation. The protein is D-alanine--D-alanine ligase of Methylibium petroleiphilum (strain ATCC BAA-1232 / LMG 22953 / PM1).